The following is a 25-amino-acid chain: Small ribosomal subunit protein uS19 (25 aa).

The disordered stretch occupies residues 1 to 25 (GHKLGEFAPTRTFRGHKKEDKKVKR).

The protein belongs to the universal ribosomal protein uS19 family.

In terms of biological role, protein S19 forms a complex with S13 that binds strongly to the 16S ribosomal RNA. In Acholeplasma laidlawii, this protein is Small ribosomal subunit protein uS19 (rpsS).